The chain runs to 178 residues: Large ribosomal subunit protein uL10 (178 aa).

This sequence belongs to the universal ribosomal protein uL10 family. Part of the ribosomal stalk of the 50S ribosomal subunit. The N-terminus interacts with L11 and the large rRNA to form the base of the stalk. The C-terminus forms an elongated spine to which L12 dimers bind in a sequential fashion forming a multimeric L10(L12)X complex.

Functionally, forms part of the ribosomal stalk, playing a central role in the interaction of the ribosome with GTP-bound translation factors. The chain is Large ribosomal subunit protein uL10 from Leuconostoc mesenteroides subsp. mesenteroides (strain ATCC 8293 / DSM 20343 / BCRC 11652 / CCM 1803 / JCM 6124 / NCDO 523 / NBRC 100496 / NCIMB 8023 / NCTC 12954 / NRRL B-1118 / 37Y).